The sequence spans 124 residues: Astakine (124 aa).

The N-terminal stretch at 1–21 is a signal peptide; it reads MAVSSAVRMLSVACLVVSAAG. 5 disulfide bridges follow: Cys-28–Cys-40, Cys-34–Cys-52, Cys-39–Cys-91, Cys-62–Cys-99, and Cys-93–Cys-106.

Belongs to the AVIT (prokineticin) family.

The protein resides in the secreted. Functionally, cytokine directly involved in hematopoiesis. In Penaeus monodon (Giant tiger prawn), this protein is Astakine.